Consider the following 1473-residue polypeptide: MDITQKNKRDGTEVTERIITETVTTRLTSLPPKGGTSNGYAKTGSLGGGSRLEKQSLTHGSSGYINSSGSLRGNASTSSYRRAHSPASTLPNSPGSTFERKTHVTRHGTYEGSSSGNSSPEYPRKEFASSSTRGRSQTRESEIRVRLQSASPSTRWTELDDVKRLLKGSRSASVSPTRNSSNTLPIPKKGTVETKVVTASSQSVSGTYDTTILDANLPSHVWSSTLPAGSSMGTYHNNITTQSSSLLNTNAYSAGSVFGVPNNMASCSATLQPGISTSSSVFGMQNNLAPSSSTLSHGMAATSTAYGVKKNMPQSPTAVSTGVSTSAASTTNVQNDDLLHKDCKFLILEKDNTPAKKEMELLIMTKDSGKVFTASPASVAATSFSEDTLKKEKQAAYTDTYLVSEANGDVKTVTAKGNGASADIHGYDHRRGGGGGGGSGGALGSGAAGGGGKGSWGAAPTWCPCGSWCSWWKWLLGLLLTWLLLLGLLFGLIALAEEVRKLKARVEELEKMRGRLSYNEKMERSSQDSVQGVAPRLGEGLGKSELDDYNLEDVWQFMKVRLMTEQENGNLRGSPGPKGDMGVQGPKGDRGFPGTPGIPGPLGHQGPEGPKGQKGNVGEPGMEGPMGQRGREGPMGPRGEPGPPGFGEKGDRGDAGKPGIPGPPGVPGSVGPKGSIGPQGLRGEVGLPGIKGDKGPMGPPGPKGDQGEKGPRGLTGEPGLKGLPGAVGEPGAKGAMGPAGPDGHQGPRGEQGLPGMPGTRGLPGPSGDPGKPGLTGPQGPQGIPGTPGRPGVKGEPGAPGKIMTSEGSSTITVPGPPGPPGAMGPPGPPGAPGPVGPAGLPGQQGPRGEPGLAGESFMGSSSSFSEVLSTQGIDLRGPPGPPGPPGPPGEGLPGPPGPPGSLLTSSETFFSGPPGPPGPPGPKGDQGPPGPRGHQGERGFPGLSGSGSSSLGLNLQGPPGPPGPQGPKGDKGDPGVPGAPGIPGGPSRGGSSSSTTFMQGPPGPPGPPGPPGSLSSSGLEIQQYISDYMQSDSIRPYLSGVQGPPGPPGPPGPVTTITGETFNYSELASLVVSYLQTSGYNIGTSSTSISSEDILAALRRDDVRQYLQQYLMPQGAGGDWFLQSLDYAELSNRILSYMSSTGVSIGLPGPPGPPGLPGTSYEELLSLLQGSEFRGIVGPPGPPGPPGLPGSSWSSISTEDLSSYLQTAGLSSIPGPPGPPGPPGPRGPPGISGALATYAAENSDSFRSELISYLTSPDVRSFIVGPPGPPGPQGPPGDTRLVSTDSSYSRSGSSSSFSRDTSYSSSMGIGGASGGSLGEAGAFGMDMGRGYGAAAESGMYGGNGRFGTSFAGGLDYNELAVRVSESLQRQGLLQGMAYTVQGPPGRPGPQGPPGISKIFSAYSNVTEDLMDFFRTYGAIPGPPGQKGEMGIPGPKGERGPAGPPGPRGHKGEKGDKGDQFYIGRRRRSIAVKP.

Residues 1-19 (MDITQKNKRDGTEVTERII) are compositionally biased toward basic and acidic residues. Disordered stretches follow at residues 1–155 (MDIT…PSTR) and 168–188 (GSRS…PIPK). Over 1 to 474 (MDITQKNKRD…CGSWCSWWKW (474 aa)) the chain is Cytoplasmic. Residues 1 to 572 (MDITQKNKRD…MTEQENGNLR (572 aa)) are nonhelical region (NC16). 3 stretches are compositionally biased toward polar residues: residues 57 to 96 (LTHG…SPGS), 111 to 120 (EGSSSGNSSP), and 170 to 184 (RSAS…SNTL). The interval 146–231 (RLQSASPSTR…WSSTLPAGSS (86 aa)) is necessary for interaction with DST and for the recruitment of DST to hemidesmosome. Residues 475–495 (LLGLLLTWLLLLGLLFGLIAL) traverse the membrane as a helical; Signal-anchor for type II membrane protein segment. At 496–1473 (AEEVRKLKAR…RRRRSIAVKP (978 aa)) the chain is on the extracellular side. Disordered regions lie at residues 567 to 1017 (ENGN…LSSS), 1173 to 1234 (FRGI…ISGA), and 1261 to 1308 (SFIV…SSMG). The triple-helical region stretch occupies residues 573-1459 (GSPGPKGDMG…KGEKGDKGDQ (887 aa)). 4 stretches are compositionally biased toward low complexity: residues 619–638 (EPGM…MGPR), 667–678 (PGSVGPKGSIGP), 729–742 (EPGA…AGPD), and 769–790 (PGKP…PGRP). Positions 814–835 (PGPPGPPGAMGPPGPPGAPGPV) are enriched in pro residues. Low complexity-rich tracts occupy residues 837–847 (PAGLPGQQGPR) and 854–866 (GESF…SFSE). Pro residues-rich tracts occupy residues 878-899 (PPGP…PGPP) and 913-922 (PPGPPGPPGP). Residues 940–957 (FPGLSGSGSSSLGLNLQG) show a composition bias toward low complexity. Pro residues-rich tracts occupy residues 1001-1011 (PPGPPGPPGPP) and 1179-1188 (PPGPPGPPGL). Over residues 1198–1210 (TEDLSSYLQTAGL) the composition is skewed to polar residues. Pro residues-rich tracts occupy residues 1214–1228 (PGPP…PRGP) and 1266–1275 (PPGPPGPQGP). Residues 1283 to 1307 (STDSSYSRSGSSSSFSRDTSYSSSM) show a composition bias toward low complexity. Residue Asn-1404 is glycosylated (N-linked (GlcNAc...) asparagine). The tract at residues 1417–1473 (GAIPGPPGQKGEMGIPGPKGERGPAGPPGPRGHKGEKGDKGDQFYIGRRRRSIAVKP) is disordered. The segment covering 1449–1458 (HKGEKGDKGD) has biased composition (basic and acidic residues). The tract at residues 1460–1473 (FYIGRRRRSIAVKP) is nonhelical region (NC1). The segment covering 1463-1473 (GRRRRSIAVKP) has biased composition (basic residues).

In terms of assembly, homotrimers of alpha 1(XVII)chains. Interacts (via cytoplasmic region) with ITGB4 (via cytoplasmic region). Interacts (via cytoplasmic region) with DST (via N-terminus). Interacts (via N-terminus) with PLEC. Interacts (via cytoplasmic region) with DSP. Post-translationally, the intracellular/endo domain is disulfide-linked. Prolines at the third position of the tripeptide repeating unit (G-X-Y) are hydroxylated in some or all of the chains. In terms of processing, the ectodomain is shedded from the surface of keratinocytes resulting in a 120-kDa soluble form, also named as 120 kDa linear IgA disease antigen homolog. The shedding is mediated by membrane-bound metalloproteases.

It localises to the cell junction. Its subcellular location is the hemidesmosome. The protein resides in the membrane. It is found in the secreted. The protein localises to the extracellular space. It localises to the extracellular matrix. Its subcellular location is the basement membrane. Its function is as follows. May play a role in the integrity of hemidesmosome and the attachment of basal keratinocytes to the underlying basement membrane. Functionally, the 120 kDa linear IgA disease antigen homolog is an anchoring filament component involved in dermal-epidermal cohesion. In Bos taurus (Bovine), this protein is Collagen alpha-1(XVII) chain (COL17A1).